We begin with the raw amino-acid sequence, 174 residues long: Transcription factor bHLH36 (174 aa).

Positions 1 to 53 (MEKMMHRETERQRRQEMASLYASLRSLLPLHFIKGKRSTSDQVNEAVNYIKYL) constitute a bHLH domain.

In terms of assembly, homodimer. Expressed constitutively in roots, leaves, stems, and flowers.

It is found in the nucleus. The chain is Transcription factor bHLH36 (BHLH36) from Arabidopsis thaliana (Mouse-ear cress).